We begin with the raw amino-acid sequence, 1367 residues long: Protein patched homolog 3 (1367 aa).

Residues 1–97 (MSFPDEETDL…WLFRIGCFVQ (97 aa)) are Cytoplasmic-facing. Residues 98-118 (RWAWSTIFISLFLYCLCLGGL) traverse the membrane as a helical segment. At 119-625 (RHVTIETDLV…IADMLEEFSQ (507 aa)) the chain is on the extracellular side. Asparagine 235, asparagine 310, asparagine 454, and asparagine 591 each carry an N-linked (GlcNAc...) asparagine glycan. A helical transmembrane segment spans residues 626-646 (FNYIIIVIGYILMVIYAAFTQ). One can recognise an SSD domain in the interval 627-788 (NYIIIVIGYI…MFIFPAMIGI (162 aa)). Residues 647 to 659 (GRFQGWWLAVQSN) are Cytoplasmic-facing. The chain crosses the membrane as a helical span at residues 660–680 (VALAICGVILVTISSICGLGF). The Extracellular portion of the chain corresponds to 681-694 (ATHLGINFNAATTQ). A helical membrane pass occupies residues 695-715 (VVPFLSLGLGIDDMFLLLHNY). Topologically, residues 716–737 (DEIINICNKNEIGVLLKETGMS) are cytoplasmic. The chain crosses the membrane as a helical span at residues 738–758 (VMLTSINNILAFISGYVLPIP). The Extracellular segment spans residues 759 to 767 (ALRSFCSQT). Residues 768 to 788 (AILLAFNLIFLMFIFPAMIGI) traverse the membrane as a helical segment. Residues 789 to 863 (DLRRQRKGKR…KIYIPALKNN (75 aa)) are Cytoplasmic-facing. Residues 864 to 884 (VVKACVLIGTTTAVVFGLYGM) form a helical membrane-spanning segment. The Extracellular segment spans residues 885-1143 (YTSTLGLELA…WEQYLTLRWN (259 aa)). The helical transmembrane segment at 1144-1164 (LFQAICIIALAVFCVISILMF) threads the bilayer. Residues 1165–1171 (NPWAATL) are Cytoplasmic-facing. A helical transmembrane segment spans residues 1172–1192 (IMCIVVITTIELGGFMGLMGI). The Extracellular segment spans residues 1193–1199 (KMNPISA). A helical membrane pass occupies residues 1200-1220 (VTLICAVGIGVEFTAHVELAF). At 1221-1237 (LTALGTIDQRLESCLQH) the chain is on the cytoplasmic side. Residues 1238–1258 (MFVPVYHGAISTFLGVVMLVF) traverse the membrane as a helical segment. Over 1259–1273 (SEFDFVVTYFFYTMT) the chain is Extracellular. Residues 1274–1294 (LLVALGVFNGLCVLPVILTLV) traverse the membrane as a helical segment. Residues 1295–1367 (GPKPELTPTD…SDDESSPAHK (73 aa)) are Cytoplasmic-facing. The disordered stretch occupies residues 1302–1367 (PTDGSSVLPP…SDDESSPAHK (66 aa)). The segment covering 1346-1356 (RDSPSTSSASH) has biased composition (low complexity).

Belongs to the patched family. As to expression, in males, expressed in the precursor and mature sensory rays, the cloaca, and pre-anal ganglia and cephalic neurons. Also expressed in five cells in the valve region between the seminal vesicle and vas deferens of the somatic gonad.

Its subcellular location is the apical cell membrane. The protein resides in the cell junction. It is found in the adherens junction. Regulates osmosis during embryonic development. Required for larval development and in particular is involved in larval molting. The sequence is that of Protein patched homolog 3 from Caenorhabditis elegans.